Consider the following 237-residue polypeptide: Large ribosomal subunit protein uL1 (237 aa).

The protein belongs to the universal ribosomal protein uL1 family. In terms of assembly, part of the 50S ribosomal subunit.

Binds directly to 23S rRNA. The L1 stalk is quite mobile in the ribosome, and is involved in E site tRNA release. Its function is as follows. Protein L1 is also a translational repressor protein, it controls the translation of the L11 operon by binding to its mRNA. The chain is Large ribosomal subunit protein uL1 from Chloroflexus aurantiacus (strain ATCC 29364 / DSM 637 / Y-400-fl).